A 72-amino-acid polypeptide reads, in one-letter code: SRY-related protein ADW4 (72 aa).

Residues 1-69 constitute a DNA-binding region (HMG box); the sequence is VKRPMNAFMV…KHMADYPNYK (69 aa).

The protein localises to the nucleus. This is SRY-related protein ADW4 from Alligator mississippiensis (American alligator).